The sequence spans 362 residues: MQNIFENCSYHSKYEPYFLNCTNTTNQCVLIQDVGIIQAIDFWANLCIPFTLFVIAFILNGYYLSILIPEFRKMNDTTKKQYIFVVSRGISSLSASSIMMVLRLLKMLSTSFTVYFLFFLIDDLSFYSLLGSYVGSTLLLYLATVRPIFYSIQISVRIVYKFALVNVLLAVVLAVTTAIFQAAEVSDGFFHCDVQHCQPIINIAMFVIIATSFLIPIITLTFVLVTLCFQKSRTQSIGNFTVDNSVYKSARTRLAWTLFTFTLISLTEMIPSSFLVNLRVEDTITICVNFYQADHLFIPAIMNSFQTLAWGIALIVDPLCALLFDPRIRKVWVEHVSRLSIIIGRSFEACCHSNLNKEIQDK.

The Extracellular segment spans residues 1–47 (MQNIFENCSYHSKYEPYFLNCTNTTNQCVLIQDVGIIQAIDFWANLC). N-linked (GlcNAc...) asparagine glycans are attached at residues asparagine 7, asparagine 20, and asparagine 23. The chain crosses the membrane as a helical span at residues 48-68 (IPFTLFVIAFILNGYYLSILI). The Cytoplasmic segment spans residues 69-81 (PEFRKMNDTTKKQ). A helical membrane pass occupies residues 82-102 (YIFVVSRGISSLSASSIMMVL). Over 103–125 (RLLKMLSTSFTVYFLFFLIDDLS) the chain is Extracellular. Residues 126-145 (FYSLLGSYVGSTLLLYLATV) form a helical membrane-spanning segment. The Cytoplasmic portion of the chain corresponds to 146–161 (RPIFYSIQISVRIVYK). Residues 162–182 (FALVNVLLAVVLAVTTAIFQA) form a helical membrane-spanning segment. Residues 183-204 (AEVSDGFFHCDVQHCQPIINIA) lie on the Extracellular side of the membrane. The helical transmembrane segment at 205 to 225 (MFVIIATSFLIPIITLTFVLV) threads the bilayer. The Cytoplasmic portion of the chain corresponds to 226–255 (TLCFQKSRTQSIGNFTVDNSVYKSARTRLA). The helical transmembrane segment at 256-276 (WTLFTFTLISLTEMIPSSFLV) threads the bilayer. At 277-295 (NLRVEDTITICVNFYQADH) the chain is on the extracellular side. The chain crosses the membrane as a helical span at residues 296 to 316 (LFIPAIMNSFQTLAWGIALIV). At 317 to 362 (DPLCALLFDPRIRKVWVEHVSRLSIIIGRSFEACCHSNLNKEIQDK) the chain is on the cytoplasmic side.

Belongs to the G-protein coupled receptor 1 family. B0244 subfamily.

The protein resides in the cell membrane. The chain is Putative G-protein coupled receptor B0244.5 from Caenorhabditis elegans.